Consider the following 507-residue polypeptide: ATP synthase subunit alpha, chloroplastic (507 aa).

An ATP-binding site is contributed by 170-177 (GDRQTGKT).

It belongs to the ATPase alpha/beta chains family. As to quaternary structure, F-type ATPases have 2 components, CF(1) - the catalytic core - and CF(0) - the membrane proton channel. CF(1) has five subunits: alpha(3), beta(3), gamma(1), delta(1), epsilon(1). CF(0) has four main subunits: a, b, b' and c.

The protein localises to the plastid. It is found in the chloroplast thylakoid membrane. The enzyme catalyses ATP + H2O + 4 H(+)(in) = ADP + phosphate + 5 H(+)(out). Its function is as follows. Produces ATP from ADP in the presence of a proton gradient across the membrane. The alpha chain is a regulatory subunit. This is ATP synthase subunit alpha, chloroplastic from Anthoceros angustus (Hornwort).